We begin with the raw amino-acid sequence, 345 residues long: S-adenosylmethionine:tRNA ribosyltransferase-isomerase (345 aa).

Belongs to the QueA family. Monomer.

It localises to the cytoplasm. The enzyme catalyses 7-aminomethyl-7-carbaguanosine(34) in tRNA + S-adenosyl-L-methionine = epoxyqueuosine(34) in tRNA + adenine + L-methionine + 2 H(+). The protein operates within tRNA modification; tRNA-queuosine biosynthesis. Transfers and isomerizes the ribose moiety from AdoMet to the 7-aminomethyl group of 7-deazaguanine (preQ1-tRNA) to give epoxyqueuosine (oQ-tRNA). This is S-adenosylmethionine:tRNA ribosyltransferase-isomerase from Acinetobacter baumannii (strain AB0057).